The following is a 490-amino-acid chain: ATP synthase subunit beta, chloroplastic (490 aa).

Residue 170–177 (GGAGVGKT) coordinates ATP.

It belongs to the ATPase alpha/beta chains family. F-type ATPases have 2 components, CF(1) - the catalytic core - and CF(0) - the membrane proton channel. CF(1) has five subunits: alpha(3), beta(3), gamma(1), delta(1), epsilon(1). CF(0) has four main subunits: a(1), b(1), b'(1) and c(9-12).

The protein resides in the plastid. It is found in the chloroplast thylakoid membrane. It carries out the reaction ATP + H2O + 4 H(+)(in) = ADP + phosphate + 5 H(+)(out). In terms of biological role, produces ATP from ADP in the presence of a proton gradient across the membrane. The catalytic sites are hosted primarily by the beta subunits. In Ipomoea obscura (Obscure morning glory), this protein is ATP synthase subunit beta, chloroplastic.